We begin with the raw amino-acid sequence, 758 residues long: Relaxin receptor 1 (758 aa).

Over 1-409 (MTSGPFFFCI…ENLLASIIQR (409 aa)) the chain is Extracellular. Positions 26–63 (SCPLGSFPCGNMSRCLPQLLHCNGVDDCGNRADEDHCG) constitute an LDL-receptor class A domain. 3 cysteine pairs are disulfide-bonded: Cys27–Cys40, Cys34–Cys53, and Cys47–Cys62. An N-linked (GlcNAc...) asparagine glycan is attached at Asn36. Ca(2+)-binding residues include Leu45, Asn48, Val50, Asp52, Asp58, and Glu59. An N-linked (GlcNAc...) asparagine glycan is attached at Asn127. 10 LRR repeats span residues 127-148 (NVTV…GFRK), 151-172 (ELQK…AFRG), 175-196 (SLTK…VFED), 199-220 (RLEW…TFYG), 223-244 (SLIL…PLCQ), 248-269 (RLHW…TFIS), 272-293 (NLTV…AFTH), 296-317 (KLDE…IFKD), 320-341 (ELSQ…QFDC), and 344-365 (KLKS…MFRP). N-linked (GlcNAc...) asparagine glycans are attached at residues Asn264 and Asn272. The N-linked (GlcNAc...) asparagine glycan is linked to Asn325. N-linked (GlcNAc...) asparagine glycosylation occurs at Asn368. Residues 410–430 (VFVWVVSAITCFGNIFVICMR) traverse the membrane as a helical segment. Residues 431–443 (PYIRSENKLHAMS) lie on the Cytoplasmic side of the membrane. The helical transmembrane segment at 444–464 (IISLCCADCLMGVYLFVIGAF) threads the bilayer. The Extracellular portion of the chain corresponds to 465–486 (DLKFRGEYNKHAQPWMESVHCQ). The cysteines at positions 485 and 563 are disulfide-linked. A helical transmembrane segment spans residues 487–507 (FMGSLAILSTEVSVLLLTFLT). Over 508-527 (LEKYICIVYPFRCLRPRKCR) the chain is Cytoplasmic. The helical transmembrane segment at 528 to 548 (TITVLIFIWIIGFIVAFAPLG) threads the bilayer. Residues 549–577 (NKEFFKNYYGTNGVCFPLHSEDTGSTGAQ) lie on the Extracellular side of the membrane. A helical membrane pass occupies residues 578–598 (IYSVVIFLGINLVAFIIIVFS). Topologically, residues 599-629 (YGSMFYSVHQSSVTVTEIQKQVKKEVVLAKR) are cytoplasmic. Residues 630–650 (FFFIVFTDALCWIPIFILKFL) traverse the membrane as a helical segment. A topological domain (extracellular) is located at residue Ser651. Residues 652–672 (LLQVEIPDSITSWVVIFILPI) form a helical membrane-spanning segment. Over 673–758 (NSALNPIIYT…SQSSRLNSYS (86 aa)) the chain is Cytoplasmic.

This sequence belongs to the G-protein coupled receptor 1 family. Interacts with C1QTNF8.

It is found in the cell membrane. Functionally, receptor for relaxins. The activity of this receptor is mediated by G proteins leading to stimulation of adenylate cyclase and an increase of cAMP. Binding of the ligand may also activate a tyrosine kinase pathway that inhibits the activity of a phosphodiesterase that degrades cAMP. This chain is Relaxin receptor 1 (Rxfp1), found in Mus musculus (Mouse).